The sequence spans 366 residues: MLRLLAIETSCDETAVAVVEADAAWPTFAPRQLSSVVASQIDLHAAYGGVVPEVAARRHVETLPFVLESALQQAGLGMAEVDAVAVTCAPGLVGSLLVGLMAAKTLALLYNKPLIGVHHLEGHLFSGFLAAADLRPPCLGLLVSGGHTSLIWMKDYGEYQTMGRTRDDAAGEAFDKVARLLGLGYPGGPQIDRWAQQGDPDRFPLPEGKLDHPYDTSFSGLKTAVLRLVQQLQQEGQELPVADIAASFQACLTRVLTEKAVACAEALGLSTLLVTGGVAANRELRARLLEAGRQKGLRVVIPPPNLCTDNAAMIGAAGLCHWLRGETSPLELGVASRLTLEEIPALYGQGSGGCGQAPTGAAAAVF.

Fe cation contacts are provided by histidine 119 and histidine 123. Substrate-binding positions include 142-146 (LVSGG), aspartate 175, glycine 188, aspartate 192, and asparagine 281. Residue aspartate 309 participates in Fe cation binding.

Belongs to the KAE1 / TsaD family. Fe(2+) is required as a cofactor.

Its subcellular location is the cytoplasm. The catalysed reaction is L-threonylcarbamoyladenylate + adenosine(37) in tRNA = N(6)-L-threonylcarbamoyladenosine(37) in tRNA + AMP + H(+). Functionally, required for the formation of a threonylcarbamoyl group on adenosine at position 37 (t(6)A37) in tRNAs that read codons beginning with adenine. Is involved in the transfer of the threonylcarbamoyl moiety of threonylcarbamoyl-AMP (TC-AMP) to the N6 group of A37, together with TsaE and TsaB. TsaD likely plays a direct catalytic role in this reaction. The sequence is that of tRNA N6-adenosine threonylcarbamoyltransferase from Synechococcus sp. (strain JA-3-3Ab) (Cyanobacteria bacterium Yellowstone A-Prime).